The primary structure comprises 263 residues: Palmitoyltransferase ZDHHC22 (263 aa).

Over 1-9 the chain is Cytoplasmic; sequence MLALRLLNV. The chain crosses the membrane as a helical span at residues 10 to 30; that stretch reads VAPAYFLCISLVTFVLQLFLF. Over 31–48 the chain is Lumenal; that stretch reads LPSMREDPTATPLFSPAV. Residues 49–69 traverse the membrane as a helical segment; that stretch reads LHGALFLFLSANALGNYVLVI. Residues 70–125 lie on the Cytoplasmic side of the membrane; that stretch reads QNSPDDLGTCQGTMSQRPQCPPPSTHFCRVCSRVTLRHDHHCFFTGNCIGSRNMRN. The DHHC domain maps to 91-131; that stretch reads PPSTHFCRVCSRVTLRHDHHCFFTGNCIGSRNMRNFILFCL. The S-palmitoyl cysteine intermediate role is filled by Cys-111. Helical transmembrane passes span 126-146 and 147-167; these read FILFCLYTSLACLYSMVAGVA and YISAVLSISFAHPLAFLTLLP. The Cytoplasmic segment spans residues 168 to 182; sequence TSISQFFSGAVLGSD. Residues 183-203 traverse the membrane as a helical segment; the sequence is MFVILMLYLWFAVGLACAGFC. At 204-263 the chain is on the lumenal side; that stretch reads CHQLLLILRGQTRYQVRKGMAVRARPWRKNLQEVFGKRWLLGLLVPMFNVGTESSKQQDK.

This sequence belongs to the DHHC palmitoyltransferase family. Interacts with CNN3.

It localises to the endoplasmic reticulum membrane. The protein resides in the golgi apparatus membrane. It catalyses the reaction L-cysteinyl-[protein] + hexadecanoyl-CoA = S-hexadecanoyl-L-cysteinyl-[protein] + CoA. Its function is as follows. Palmitoyltransferase that could catalyze the addition of palmitate onto various protein substrates and be involved in a variety of cellular processes. Catalyzes the palmitoylation of KCNMA1, regulating localization of KCNMA1 to the plasma membrane. Might also mediate palmitoylation of CNN3. This chain is Palmitoyltransferase ZDHHC22, found in Mus musculus (Mouse).